The sequence spans 60 residues: UPF0434 protein NMC0623 (60 aa).

The protein belongs to the UPF0434 family.

This Neisseria meningitidis serogroup C / serotype 2a (strain ATCC 700532 / DSM 15464 / FAM18) protein is UPF0434 protein NMC0623.